The sequence spans 315 residues: Ribosomal RNA small subunit methyltransferase H (315 aa).

S-adenosyl-L-methionine contacts are provided by residues G37–H39, D57, F83, D105, and Q112.

The protein belongs to the methyltransferase superfamily. RsmH family.

The protein resides in the cytoplasm. The catalysed reaction is cytidine(1402) in 16S rRNA + S-adenosyl-L-methionine = N(4)-methylcytidine(1402) in 16S rRNA + S-adenosyl-L-homocysteine + H(+). Specifically methylates the N4 position of cytidine in position 1402 (C1402) of 16S rRNA. This chain is Ribosomal RNA small subunit methyltransferase H, found in Pseudomonas putida (strain GB-1).